A 389-amino-acid polypeptide reads, in one-letter code: Alpha-2B adrenergic receptor (389 aa).

Residues 1 to 25 traverse the membrane as a helical segment; it reads AIAAVITFLILFTIFGNALVILAVL. Over 26–36 the chain is Cytoplasmic; it reads TSRSLRAPQNL. The helical transmembrane segment at 37–62 threads the bilayer; sequence FLVSLAAADILVATLIIPFSLANELL. Topologically, residues 63–72 are extracellular; the sequence is GYWYFRRTWC. C72 and C151 are disulfide-bonded. Residues 73 to 95 form a helical membrane-spanning segment; it reads EVYLALDVLFCTSSIVHLCAISL. The Cytoplasmic portion of the chain corresponds to 96–117; it reads DRYWAVTRALEYNTKRTPRRIK. Residues 118-140 form a helical membrane-spanning segment; it reads CIILTVWLIAAVISLPPLIYKGD. Topologically, residues 141–156 are extracellular; it reads QGPQPRGRPQCKLNQE. Residues 157–180 traverse the membrane as a helical segment; it reads AWYILASSIGSFFAPCLIMILVYL. Topologically, residues 181–363 are cytoplasmic; sequence RIYLIAKRSH…LTREKRFTFV (183 aa). Disordered regions lie at residues 194–216 and 233–320; these read PRAK…AGAS and EANG…PLQQ. Residues 196–205 are compositionally biased toward gly residues; the sequence is AKGGPGGGGS. Residues 255–267 are compositionally biased toward low complexity; that stretch reads PALPSSWPALPSS. Acidic residues predominate over residues 280 to 302; it reads LEEEAEEEEEEEEEEEEGEEECE. The span at 303 to 320 shows a compositional bias: low complexity; it reads PQALPASPASACSPPLQQ. The chain crosses the membrane as a helical span at residues 364-387; the sequence is LAVVIGVFVLCWFPFFFSYSLGAI. Residues 388 to 389 are Extracellular-facing; the sequence is CP.

It belongs to the G-protein coupled receptor 1 family. Adrenergic receptor subfamily. ADRA2B sub-subfamily. As to quaternary structure, interacts with RAB26. Interacts with PPP1R9B. Interacts with GGA1, GGA2 and GGA3.

Its subcellular location is the cell membrane. Its function is as follows. Alpha-2 adrenergic receptors mediate the catecholamine-induced inhibition of adenylate cyclase through the action of G proteins. The protein is Alpha-2B adrenergic receptor (ADRA2B) of Equus caballus (Horse).